Consider the following 340-residue polypeptide: Lipopolysaccharide heptosyltransferase 3 (340 aa).

Belongs to the glycosyltransferase 9 family.

The enzyme catalyses an L-alpha-D-Hep-(1-&gt;3)-4-O-phospho-L-alpha-D-Hep-(1-&gt;5)-[alpha-Kdo-(2-&gt;4)]-alpha-Kdo-(2-&gt;6)-lipid A + ADP-L-glycero-beta-D-manno-heptose = an L-alpha-D-Hep-(1-&gt;7)-L-alpha-D-Hep-(1-&gt;3)-4-O-phospho-L-alpha-D-Hep-(1-&gt;5)-[alpha-Kdo-(2-&gt;4)]-alpha-Kdo-(2-&gt;6)-lipid A + ADP + H(+). It carries out the reaction L-alpha-D-Hep-(1-&gt;3)-4-O-phospho-L-alpha-D-Hep-(1-&gt;5)-[alpha-Kdo-(2-&gt;4)]-alpha-Kdo-(2-&gt;6)-lipid A (E. coli) + ADP-L-glycero-beta-D-manno-heptose = L-alpha-D-Hep-(1-&gt;7)-L-alpha-D-Hep-(1-&gt;3)-4-O-phospho-L-alpha-D-Hep-(1-&gt;5)-[alpha-Kdo-(2-&gt;4)]-alpha-Kdo-(2-&gt;6)-lipid A (E. coli) + ADP + H(+). The protein operates within bacterial outer membrane biogenesis; LPS core biosynthesis. In terms of biological role, glycosyltransferase involved in the biosynthesis of the core oligosaccharide region of lipopolysaccharide (LPS). Catalyzes the addition of the third heptose unit (HepIII) to the second heptose unit (HepII) of the phospho-Hep2-Kdo2-lipid A module. The transfer of HepIII seems to be a prerequisite to the phosphorylation of the second heptose unit. This is Lipopolysaccharide heptosyltransferase 3 from Escherichia coli.